A 554-amino-acid polypeptide reads, in one-letter code: Urocanate hydratase (554 aa).

NAD(+) contacts are provided by residues 51-52, Q129, 175-177, E195, R200, 241-242, 262-266, 272-273, and Y321; these read GG, GMG, NA, QTSAH, and YL. C409 is a catalytic residue. Position 491 (G491) interacts with NAD(+).

Belongs to the urocanase family. NAD(+) serves as cofactor.

Its subcellular location is the cytoplasm. It catalyses the reaction 4-imidazolone-5-propanoate = trans-urocanate + H2O. The protein operates within amino-acid degradation; L-histidine degradation into L-glutamate; N-formimidoyl-L-glutamate from L-histidine: step 2/3. Catalyzes the conversion of urocanate to 4-imidazolone-5-propionate. The protein is Urocanate hydratase of Caulobacter sp. (strain K31).